Here is a 282-residue protein sequence, read N- to C-terminus: Succinate dehydrogenase [ubiquinone] iron-sulfur subunit, mitochondrial (282 aa).

The 2Fe-2S ferredoxin-type domain maps to 43-131; the sequence is YRFNPEAPGA…STKIYPLPHM (89 aa). Cys91, Cys96, Cys99, and Cys111 together coordinate [2Fe-2S] cluster. One can recognise a 4Fe-4S ferredoxin-type domain in the interval 174–204; the sequence is ERDRLDGLYECILCACCSTSCPSYWWNADKY. Residues Cys184, Cys187, and Cys190 each coordinate [4Fe-4S] cluster. A [3Fe-4S] cluster-binding site is contributed by Cys194. An a ubiquinone-binding site is contributed by Trp199. Cys241 and Cys247 together coordinate [3Fe-4S] cluster. Cys251 lines the [4Fe-4S] cluster pocket.

It belongs to the succinate dehydrogenase/fumarate reductase iron-sulfur protein family. As to quaternary structure, component of complex II composed of four subunits: a flavoprotein (FP), an iron-sulfur protein (IP), and a cytochrome b composed of a large and a small subunit. The cofactor is [2Fe-2S] cluster. [3Fe-4S] cluster serves as cofactor. [4Fe-4S] cluster is required as a cofactor.

The protein localises to the mitochondrion inner membrane. The catalysed reaction is a quinone + succinate = fumarate + a quinol. The protein operates within carbohydrate metabolism; tricarboxylic acid cycle; fumarate from succinate (eukaryal route): step 1/1. Its function is as follows. Iron-sulfur protein (IP) subunit of succinate dehydrogenase (SDH) that is involved in complex II of the mitochondrial electron transport chain and is responsible for transferring electrons from succinate to ubiquinone (coenzyme Q). This is Succinate dehydrogenase [ubiquinone] iron-sulfur subunit, mitochondrial from Caenorhabditis briggsae.